Reading from the N-terminus, the 60-residue chain is LKCNRLIPPFWKTCPEGKNLCYKMTMRLAPKVPVKRGCIDVCPKSSLLIKYMCCNTNKCN.

Cystine bridges form between cysteine 3–cysteine 21, cysteine 14–cysteine 38, cysteine 42–cysteine 53, and cysteine 54–cysteine 59.

It belongs to the three-finger toxin family. Short-chain subfamily. Type IA cytotoxin sub-subfamily. In terms of assembly, monomer in solution; Homodimer and oligomer in the presence of negatively charged lipids forming a pore with a size ranging between 20 and 30 Angstroms. Expressed by the venom gland.

It localises to the secreted. Its subcellular location is the target cell membrane. In terms of biological role, shows cytolytic activity on many different cells by forming pore in lipid membranes. In vivo, increases heart rate or kills the animal by cardiac arrest. In addition, it binds to heparin with high affinity, interacts with Kv channel-interacting protein 1 (KCNIP1) in a calcium-independent manner, and binds to integrin alpha-V/beta-3 (ITGAV/ITGB3) with moderate affinity. This chain is Cytotoxin 3, found in Naja mossambica (Mozambique spitting cobra).